The following is a 272-amino-acid chain: Tryptophan synthase alpha chain (272 aa).

Active-site proton acceptor residues include E60 and D71.

Belongs to the TrpA family. As to quaternary structure, tetramer of two alpha and two beta chains.

It carries out the reaction (1S,2R)-1-C-(indol-3-yl)glycerol 3-phosphate + L-serine = D-glyceraldehyde 3-phosphate + L-tryptophan + H2O. It functions in the pathway amino-acid biosynthesis; L-tryptophan biosynthesis; L-tryptophan from chorismate: step 5/5. Its function is as follows. The alpha subunit is responsible for the aldol cleavage of indoleglycerol phosphate to indole and glyceraldehyde 3-phosphate. This chain is Tryptophan synthase alpha chain, found in Methanosarcina acetivorans (strain ATCC 35395 / DSM 2834 / JCM 12185 / C2A).